Here is a 179-residue protein sequence, read N- to C-terminus: Large ribosomal subunit protein uL5 (179 aa).

The protein belongs to the universal ribosomal protein uL5 family. In terms of assembly, part of the 50S ribosomal subunit; part of the 5S rRNA/L5/L18/L25 subcomplex. Contacts the 5S rRNA and the P site tRNA. Forms a bridge to the 30S subunit in the 70S ribosome.

Its function is as follows. This is one of the proteins that bind and probably mediate the attachment of the 5S RNA into the large ribosomal subunit, where it forms part of the central protuberance. In the 70S ribosome it contacts protein S13 of the 30S subunit (bridge B1b), connecting the 2 subunits; this bridge is implicated in subunit movement. Contacts the P site tRNA; the 5S rRNA and some of its associated proteins might help stabilize positioning of ribosome-bound tRNAs. This chain is Large ribosomal subunit protein uL5, found in Shewanella sp. (strain ANA-3).